Here is a 390-residue protein sequence, read N- to C-terminus: S-adenosylmethionine synthase (390 aa).

Residue His-15 coordinates ATP. Asp-17 serves as a coordination point for Mg(2+). Glu-43 contacts K(+). Residues Glu-56 and Gln-99 each contribute to the L-methionine site. The flexible loop stretch occupies residues Gln-99–Arg-109. Residues Asp-164–Lys-166, Arg-230–Phe-231, Asp-239, Arg-245–Lys-246, Ala-262, and Lys-266 contribute to the ATP site. Asp-239 contributes to the L-methionine binding site. Lys-270 provides a ligand contact to L-methionine.

It belongs to the AdoMet synthase family. In terms of assembly, homotetramer; dimer of dimers. Mg(2+) is required as a cofactor. The cofactor is K(+).

The protein resides in the cytoplasm. The enzyme catalyses L-methionine + ATP + H2O = S-adenosyl-L-methionine + phosphate + diphosphate. It participates in amino-acid biosynthesis; S-adenosyl-L-methionine biosynthesis; S-adenosyl-L-methionine from L-methionine: step 1/1. Its function is as follows. Catalyzes the formation of S-adenosylmethionine (AdoMet) from methionine and ATP. The overall synthetic reaction is composed of two sequential steps, AdoMet formation and the subsequent tripolyphosphate hydrolysis which occurs prior to release of AdoMet from the enzyme. This is S-adenosylmethionine synthase from Photorhabdus laumondii subsp. laumondii (strain DSM 15139 / CIP 105565 / TT01) (Photorhabdus luminescens subsp. laumondii).